The following is a 322-amino-acid chain: Phthalate dioxygenase reductase (322 aa).

One can recognise an FAD-binding FR-type domain in the interval 7–109 (DGFLRLKIAS…SLPRNEFPLD (103 aa)). FMN-binding positions include 56–57 (RT), 73–75 (AVK), 81–84 (RGGS), Thr-125, and Phe-226. One can recognise a 2Fe-2S ferredoxin-type domain in the interval 239 to 322 (FTVRLSRSGT…AKSAELVLDL (84 aa)). A [2Fe-2S] cluster-binding site is contributed by Cys-273. Ser-275 contributes to the FMN binding site. The [2Fe-2S] cluster site is built by Cys-278, Cys-281, and Cys-309.

Belongs to the PDR/VanB family. Monomer. FMN serves as cofactor.

In terms of biological role, component of the electron transfer chain involved in pyridine nucleotide-dependent dihydroxylation of phthalate. Utilizes FMN to mediate electron transfer from the two-electron donor, NADH, to the one-electron acceptor, (2Fe-2S). The protein is Phthalate dioxygenase reductase (ophA1) of Burkholderia cepacia (Pseudomonas cepacia).